A 310-amino-acid polypeptide reads, in one-letter code: UPF0324 membrane protein GSU2818 (310 aa).

9 consecutive transmembrane segments (helical) span residues 11–33 (FTIL…VMGI), 53–72 (MLLQ…GEVI), 79–97 (IWYS…YGLG), 107–129 (SALI…APVL), 136–158 (TAVA…PLVG), 193–215 (ALAI…VMAA), 227–244 (IPLF…RTLL), 254–273 (LAGV…GAGL), and 286–308 (LVQA…KLPW).

This sequence belongs to the UPF0324 family.

Its subcellular location is the cell membrane. The sequence is that of UPF0324 membrane protein GSU2818 from Geobacter sulfurreducens (strain ATCC 51573 / DSM 12127 / PCA).